The following is a 216-amino-acid chain: Sporozoite antigen (216 aa).

Residues 194 to 216 (QQQQPSSYGAPPASSQQPSGFFW) form a disordered region.

The chain is Sporozoite antigen from Eimeria tenella (Coccidian parasite).